A 3587-amino-acid chain; its full sequence is MSVFSKEQVQDMYALTPMQEGMLFHALLDQEHNSHLVQMSISLQGDLDVGLFTDSLHVLVERYDVFRTLFLYEKLKQPLQVVLKQRPIPIEFYDLSACDESEKQLRYTQYKRADQERTFHLAKDPLMRVALFQMSQHDYQVIWSFHHILMDGWCFSIIFDDLLAIYLSLQNKTALSLEPVQPYSRFINWLEKQNKQAALNYWSDYLEAYEQKTTLPKKEAAFAKAFQPTQYRFSLNRTLTKQLGTIASQNQVTLSTVIQTIWGVLLQKYNAAHDVLFGSVVSGRPTDIVGIDKMVGLFINTIPFRVQAKAGQTFSELLQAVHKRTLQSQPYEHVPLYDIQTQSVLKQELIDHLLVIENYPLVEALQKKALNQQIGFTITAVEMFEPTNYDLTVMVMPKEELAFRFDYNAALFDEQVVQKLAGHLQQIADCVANNSGVELCQIPLLTEAETSQLLAKRTETAADYPAATMHELFSRQAEKTPEQVAVVFADQHLTYRELDEKSNQLARFLRKKGIGTGSLVGTLLDRSLDMIVGILGVLKAGGAFVPIDPELPAERIAYMLTHSRVPLVVTQNHLRAKVTTPTETIDINTAVIGEESRAPIESLNQPHDLFYIIYTSGTTGQPKGVMLEHRNMANLMHFTFDQTNIAFHEKVLQYTTCSFDVCYQEIFSTLLSGGQLYLITNELRRHVEKLFAFIQEKQISILSLPVSFLKFIFNEQDYAQSFPRCVKHIITAGEQLVVTHELQKYLRQHRVFLHNHYGPSETHVVTTCTMDPGQAIPELPPIGKPISNTGIYILDEGLQLKPEGIVGELYISGANVGRGYLHQPELTAEKFLDNPYQPGERMYRTGDLALWLPDGQLEFLGRIDHQVKIRGHRIELGEIESRLLNHPAIKEAVVIDRADETGGKFLCAYVVLQKALSDEEMRAYLAQALPEYMIPSFFVTLERIPVTPNGKTDRRALPKPEGSAKTKADYVAPTTELEQKLVAIWEQILGVSPIGIQDHFFTLGGHSLKAIQLISRIQKECQADVPLRVLFEQPTIQALAAYVEGGEESAYLAIPQAEPQAYYPVSSAQKRMLILNQLDPHSTVYNLPVAMILEGTLDKARLEHAISNLVARHESLRTSFHTINGEPVSRIHEQGHLPIVYLETAEEQVNEVILGFMQPFDLVTAPLCRVGLVKLAENRHVLIIDMHHIISDGVSSQLILNDFSRLYQNKALPEQRIHYKDFAVWEKAWTQTTDYQKQEKYWLDRFAGEIPVLNLPMDYPRPAVQSFEGERYLFRTEKQLLESLQDVAQKTGTTLYMVLLAAYHVLLSKYSGQDDVMIGTVTAGRVHPDTESMTGMFVNTLAMRNQSAPTKTFRQFLLEVKDNTLAAFEHGQYPFEELVEKLAIQRNRSRNPLFDTLFILQNMDADLIELDGLTVTPYVPEGEVAKFDLSLEASENQAGLSFCFEFCTKLFARETIERMSLHYLQILQAVSANTEQELAQIEMLTAHEKQELLVHFNDTAALYPAESTLSQLFEDQAQKTPEQTAVVFGDKRLTYRELNERANQLAHTLRAKGVQAEQSVGIMAQRSLEMAIGIIAILKAGGAYVPIDPDYPNERIAYMLEDCRRLVLTQQQLAEKMTANVECLYLDEEGSYSPQTENIEPIHTAADLAYIIYTSGTTGRPKGVMVEHRGIVNSVTWNRDEFALSVRDSGTLSLSFAFDAFALTFFTLIVSGSTVVLMPDHEAKDPIALRNLIAAWECSYVVFVPSMFQAILECSTPADIRSIQAVMLGGEKLSPKLVQLCKAMHPQMSVMNAYGPTESSVMATYLRDTQPDQPITIGRPIANTAIYIVDQHHQLLPVGVVGEICIGGHGLARGYWKKPELTAEKFVANPAVPGERMYKTGDLGRWLHDGTIDFIGRVDDQIKVRGYRIEVGEIEAVLLAYDQTNEAIVVAYQDDRGDSYLAAYVTGKTAIEESELRAHLLRELPAYMVPTYLIQLDAFPLTPNGKVDRKALPKPEGKPATGAAYVAPATEVEAKLVAIWENALGISGVGVLDHFFELGGHSLKAMTVVAQVHREFQIDLLLKQFFAAPTIRDLARLIEHSEQAAGAAIQPAEPQAYYPVSSAQQRMYLLHQLEGAGISYNTPGIIMLEGKLDREQLANALQALVDRHDILRTSFEMVGDELVQKIHDRVAVNMEYVTAEEQQIDDLFHAFVRPFDLSVPPLLRMSLVKLADERHLLLYDMHHIAADAASITILFDELAELYQGRELPEMRIQYKDFAVWQKALHESDAFKQQEAYWLSTFAGNITAVDVPTDFPRPAVKSFAGGQVTLSMDQELLSALHELAAHTNTTLFMVLLAAYNVLLAKYAGQDDIIVGTPISGRSRAELAPVVGMFVHTLAIRNKPTAEKTFKQFLQEVKQNALDAFDHQDYPFESLVEKLGIPRDPGRNPLFDTMFILQNDELHAKTLDQLVYRPYESDSALDVAKFDLSFHLTERETDLFLRLEYCTKLFKQQTVERMAHHFLQILRAVTANPENELQEIEMLTAAEKQMLLVAFNDTHREYRADQTIQQLFEELAEKMPEHTALVFEEKRMSFRELNERANQLAAVLREKGVGPAQIVALLVERSAEMVIATLATLKAGGAFLPVDPDYPEERIRYMLEDSQAKLVVTHAHLLHKVSSQSEVVDVDDPGSYATQTDNLPCANTPSDLAYIIYTSGTTGKPKGVMLEHKGVANLQAVFAHHLGVTPQDRAGHFASISFDASVWDMFGPLLSGATLYVLSRDVINDFQRFAEYVRDNAITFLTLPPTYAIYLEPEQVPSLRTLITAGSASSVALVDKWKEKVTYVNGYGPTESTVCATLWKAKPDEPVETITIGKPIQNTKLYIVDDQLQLKAPGQMGELCISGLSLARGYWNRPELTAEKFVDNPFVPGTKMYRTGDLARWLPDGTIEYLGRIDHQVKIRGHRVELGEVESVLLRYDTVKEAAAITHEDDRGQAYLCAYYVAEGEATPAQLRAYMENELPNYMVPAFFIQLEKMPLTPNDKIDRKALPKPNQEENRTEQYAAPQTELEQLLAGIWADVLGIKQVGTQDNFFELGGDSIKAIQVSTRLNASGWTLAMKELFQYPTIEEAALRVIPNSRESEQGVVEGEIALTPIQKWFFANNFTDRHHWNQAVMLFREDGFDEGLVRQAFQQIVEHHDALRMVYKQEDGAIKQINRGLTDERFRFYSYDLKNHANSEARILELSDQIQSSIDLEHGPLVHVALFATKDGDHLLVAIHHLVVDGVSWRILFEDFSSAYSQALHQQEIVLPKKTDSFKDWAAQLQKYADSDELLREVAYWHNLETTTTTAALPTDFVTADRKQKHTRTLSFALTVPQTENLLRHVHHAYHTEMNDLLLTALGLAVKDWAHTNGVVINLEGHGREDIQNEMNVTRTIGWFTSQYPVVLDMEKAEDLPYQIKQTKENLRRIPKKGIGYEILRTLTTSQLQPPLAFTLRPEISFNYLGQFESDGKTGGFTFSPLGTGQLFSPESERVFLLDISAMIEDGELRISVGYSRLQYEEKTIASLADSYRKHLLGIIEHCMAKEEGEYTPSDLGDEELSMEELENILEWI.

Residues 466–1045 form a domain 1 (Proline-activating) region; the sequence is AATMHELFSR…IQALAAYVEG (580 aa). Carrier domains are found at residues 972–1047 and 2007–2082; these read APTT…EGGE and APAT…EHSE. S1007 and S2042 each carry O-(pantetheine 4'-phosphoryl)serine. The tract at residues 1522-2081 is domain 2 (Phenylalanine-activating); sequence EQTAVVFGDK…RDLARLIEHS (560 aa). Residues 2540–3122 form a domain 3 (D-phenylalanine-activating) region; it reads YRADQTIQQL…NSRESEQGVV (583 aa). Residues 3017–3040 are disordered; that stretch reads NDKIDRKALPKPNQEENRTEQYAA. Basic and acidic residues predominate over residues 3018 to 3035; it reads DKIDRKALPKPNQEENRT. The Carrier 3 domain maps to 3040–3114; that stretch reads APQTELEQLL…EAALRVIPNS (75 aa). S3075 is subject to O-(pantetheine 4'-phosphoryl)serine.

It belongs to the ATP-dependent AMP-binding enzyme family. As to quaternary structure, large multienzyme complex of TycA, TycB and TycC. Pantetheine 4'-phosphate is required as a cofactor.

It carries out the reaction L-phenylalanine + ATP + H2O = D-phenylalanine + AMP + diphosphate + H(+). Its pathway is antibiotic biosynthesis; tyrocidine biosynthesis. In terms of biological role, activates the second to fourth amino acids in tyrocidine (in tyrocidine A, Pro, Phe, and D-Phe) and epimerizes the last one. The chain is Tyrocidine synthase 2 (tycB) from Brevibacillus parabrevis.